A 146-amino-acid polypeptide reads, in one-letter code: NADH-quinone oxidoreductase subunit A (146 aa).

3 helical membrane-spanning segments follow: residues 14–34, 68–88, and 96–116; these read FGLFLIIAVGLCVFMLTGGFL, LVAMFFVIFDVEALYLYAWAV, and IGFIEATIFILVLLAGLIYLV.

It belongs to the complex I subunit 3 family. In terms of assembly, NDH-1 is composed of 13 different subunits. Subunits NuoA, H, J, K, L, M, N constitute the membrane sector of the complex.

The protein resides in the cell inner membrane. It catalyses the reaction a quinone + NADH + 5 H(+)(in) = a quinol + NAD(+) + 4 H(+)(out). In terms of biological role, NDH-1 shuttles electrons from NADH, via FMN and iron-sulfur (Fe-S) centers, to quinones in the respiratory chain. The immediate electron acceptor for the enzyme in this species is believed to be ubiquinone. Couples the redox reaction to proton translocation (for every two electrons transferred, four hydrogen ions are translocated across the cytoplasmic membrane), and thus conserves the redox energy in a proton gradient. In Pectobacterium carotovorum subsp. carotovorum (Erwinia carotovora subsp. carotovora), this protein is NADH-quinone oxidoreductase subunit A.